Reading from the N-terminus, the 366-residue chain is Ribosomal RNA large subunit methyltransferase M (366 aa).

S-adenosyl-L-methionine-binding positions include S187, S220–G223, D239, D259, and D276. K305 serves as the catalytic Proton acceptor.

The protein belongs to the class I-like SAM-binding methyltransferase superfamily. RNA methyltransferase RlmE family. RlmM subfamily. As to quaternary structure, monomer.

It is found in the cytoplasm. It catalyses the reaction cytidine(2498) in 23S rRNA + S-adenosyl-L-methionine = 2'-O-methylcytidine(2498) in 23S rRNA + S-adenosyl-L-homocysteine + H(+). Catalyzes the 2'-O-methylation at nucleotide C2498 in 23S rRNA. The polypeptide is Ribosomal RNA large subunit methyltransferase M (Tolumonas auensis (strain DSM 9187 / NBRC 110442 / TA 4)).